The sequence spans 129 residues: Ribosome-binding factor A (129 aa).

Belongs to the RbfA family. As to quaternary structure, monomer. Binds 30S ribosomal subunits, but not 50S ribosomal subunits or 70S ribosomes.

It localises to the cytoplasm. One of several proteins that assist in the late maturation steps of the functional core of the 30S ribosomal subunit. Associates with free 30S ribosomal subunits (but not with 30S subunits that are part of 70S ribosomes or polysomes). Required for efficient processing of 16S rRNA. May interact with the 5'-terminal helix region of 16S rRNA. The chain is Ribosome-binding factor A from Marinomonas sp. (strain MWYL1).